The primary structure comprises 199 residues: Probable chemoreceptor glutamine deamidase CheD (199 aa).

It belongs to the CheD family.

It carries out the reaction L-glutaminyl-[protein] + H2O = L-glutamyl-[protein] + NH4(+). Functionally, probably deamidates glutamine residues to glutamate on methyl-accepting chemotaxis receptors (MCPs), playing an important role in chemotaxis. This Cereibacter sphaeroides (Rhodobacter sphaeroides) protein is Probable chemoreceptor glutamine deamidase CheD.